We begin with the raw amino-acid sequence, 159 residues long: Major allergen Pyr c 1 (159 aa).

The protein belongs to the BetVI family.

This is Major allergen Pyr c 1 (PYRC1) from Pyrus communis (Pear).